We begin with the raw amino-acid sequence, 136 residues long: Large ribosomal subunit protein uL16 (136 aa).

Belongs to the universal ribosomal protein uL16 family. As to quaternary structure, part of the 50S ribosomal subunit.

Binds 23S rRNA and is also seen to make contacts with the A and possibly P site tRNAs. This Ehrlichia chaffeensis (strain ATCC CRL-10679 / Arkansas) protein is Large ribosomal subunit protein uL16.